Here is a 500-residue protein sequence, read N- to C-terminus: Beta-glucosidase 28 (500 aa).

Positions 1–24 (MDRRLLLSALLFIALACSSNRVHG) are cleaved as a signal peptide. Gln-45 is an a beta-D-glucoside binding site. N-linked (GlcNAc...) asparagine glycosylation is present at Asn-111. Residues His-146 and 191-192 (NE) contribute to the a beta-D-glucoside site. Catalysis depends on Glu-192, which acts as the Proton donor. Cysteines 211 and 219 form a disulfide. Tyr-337 is an a beta-D-glucoside binding site. Asn-362 is a glycosylation site (N-linked (GlcNAc...) asparagine). Residue Glu-408 coordinates a beta-D-glucoside. Catalysis depends on Glu-408, which acts as the Nucleophile. N-linked (GlcNAc...) asparagine glycosylation is found at Asn-409, Asn-415, and Asn-416. A beta-D-glucoside is bound by residues Trp-457, 464–465 (EF), and Phe-473.

This sequence belongs to the glycosyl hydrolase 1 family.

The enzyme catalyses Hydrolysis of terminal, non-reducing beta-D-glucosyl residues with release of beta-D-glucose.. This chain is Beta-glucosidase 28 (BGLU28), found in Oryza sativa subsp. japonica (Rice).